The sequence spans 915 residues: Alanine--tRNA ligase (915 aa).

Residues histidine 605, histidine 609, cysteine 709, and histidine 713 each contribute to the Zn(2+) site. Positions glycine 882 to threonine 901 are disordered.

This sequence belongs to the class-II aminoacyl-tRNA synthetase family. The cofactor is Zn(2+).

It is found in the cytoplasm. The catalysed reaction is tRNA(Ala) + L-alanine + ATP = L-alanyl-tRNA(Ala) + AMP + diphosphate. In terms of biological role, catalyzes the attachment of alanine to tRNA(Ala) in a two-step reaction: alanine is first activated by ATP to form Ala-AMP and then transferred to the acceptor end of tRNA(Ala). Also edits incorrectly charged Ser-tRNA(Ala) and Gly-tRNA(Ala) via its editing domain. This Methanopyrus kandleri (strain AV19 / DSM 6324 / JCM 9639 / NBRC 100938) protein is Alanine--tRNA ligase.